The following is a 122-amino-acid chain: Small ribosomal subunit protein uS13 (122 aa).

A disordered region spans residues 94-122 (LSLPVRGQRTKTNSRTRKGKRKTVAGKKK). Residues 101–122 (QRTKTNSRTRKGKRKTVAGKKK) are compositionally biased toward basic residues.

It belongs to the universal ribosomal protein uS13 family. Part of the 30S ribosomal subunit. Forms a loose heterodimer with protein S19. Forms two bridges to the 50S subunit in the 70S ribosome.

Its function is as follows. Located at the top of the head of the 30S subunit, it contacts several helices of the 16S rRNA. In the 70S ribosome it contacts the 23S rRNA (bridge B1a) and protein L5 of the 50S subunit (bridge B1b), connecting the 2 subunits; these bridges are implicated in subunit movement. Contacts the tRNAs in the A and P-sites. This Chlamydia muridarum (strain MoPn / Nigg) protein is Small ribosomal subunit protein uS13.